Consider the following 217-residue polypeptide: Gas vesicle protein F2 (217 aa).

The protein belongs to the gas vesicle GvpF/GvpL family. As to quaternary structure, binds GvpA.

The protein localises to the gas vesicle. It localises to the cytoplasm. Its function is as follows. A minor component of the gas vesicle, may be involved in preventing GvpA aggregation during gas vesicle nucleation. Gas vesicles are hollow, gas filled proteinaceous nanostructures found in several microbial planktonic microorganisms. They allow positioning of halobacteria at the optimal depth for growth in the poorly aerated, shallow brine pools of their habitat. In terms of biological role, expression of 2 c-vac DNA fragments containing 2 divergently transcribed regions (gvpE-gvpF-gvpG-gvpH-gvpI-gvpJ-gvpK-gvpL-gvpM and gvpA-gvpC-gvpN-gvpO) allows H.volcanii to produce gas vesicles. Note that gvpD is not necessary for gas vesicle formation. This is Gas vesicle protein F2 from Halobacterium salinarum (strain ATCC 700922 / JCM 11081 / NRC-1) (Halobacterium halobium).